Reading from the N-terminus, the 315-residue chain is beta-hydroxyaspartate dehydratase (315 aa).

Lys53 is subject to N6-(pyridoxal phosphate)lysine. Pyridoxal 5'-phosphate-binding positions include Asn80, 179–183, and Thr303; that span reads GGGGM.

Pyridoxal 5'-phosphate serves as cofactor.

It catalyses the reaction (3S)-3-hydroxy-D-aspartate = iminosuccinate + H2O. Its function is as follows. Catalyzes the dehydration of (2R,3S)-beta-hydroxyaspartate ((3S)-3-hydroxy-D-aspartate) into iminosuccinate. Is essential for the growth of P.denitrificans in the presence of glycolate and glyoxylate since it functions in glyoxylate assimilation via the beta-hydroxyaspartate cycle (BHAC). The protein is beta-hydroxyaspartate dehydratase of Paracoccus denitrificans (strain Pd 1222).